A 65-amino-acid polypeptide reads, in one-letter code: Large ribosomal subunit protein bL35 (65 aa).

Residues 1–10 (MPKMKSKSSA) show a composition bias toward basic residues. The segment at 1-21 (MPKMKSKSSAKMRFSVRAGGT) is disordered.

This sequence belongs to the bacterial ribosomal protein bL35 family.

The chain is Large ribosomal subunit protein bL35 from Polynucleobacter necessarius subsp. necessarius (strain STIR1).